The chain runs to 403 residues: Pyruvate, phosphate dikinase regulatory protein 1, chloroplastic (403 aa).

A chloroplast-targeting transit peptide spans 1-86; it reads MALLSAMKLQ…NTTGPMRPIE (86 aa). The segment at 1–108 is disordered; sequence MALLSAMKLQ…DVSSSSNGVS (108 aa). Composition is skewed to low complexity over residues 17–26, 69–80, and 87–108; these read SSNLNPNSKP, STITNGSNNTTG, and SSSR…NGVS. An ADP-binding site is contributed by 269–276; it reads GVSRTGKT.

This sequence belongs to the pyruvate, phosphate/water dikinase regulatory protein family. PDRP subfamily. In terms of assembly, interacts with PPDK1. As to expression, expressed in green tissues.

Its subcellular location is the plastid. The protein localises to the chloroplast stroma. It catalyses the reaction N(tele)-phospho-L-histidyl/L-threonyl-[pyruvate, phosphate dikinase] + ADP = N(tele)-phospho-L-histidyl/O-phospho-L-threonyl-[pyruvate, phosphate dikinase] + AMP + H(+). The catalysed reaction is N(tele)-phospho-L-histidyl/O-phospho-L-threonyl-[pyruvate, phosphate dikinase] + phosphate + H(+) = N(tele)-phospho-L-histidyl/L-threonyl-[pyruvate, phosphate dikinase] + diphosphate. Regulated by light/dark exposure. Functionally, bifunctional serine/threonine kinase and phosphorylase involved in the dark/light-mediated regulation of PPDK by catalyzing its phosphorylation/dephosphorylation. Dark/light-induced changes in stromal concentrations of the competing ADP and Pi substrates govern the direction of the reaction. In the dark, phosphorylates the catalytic intermediate of PPDK (PPDK-HisP), inactivating it. Light exposure induces the phosphorolysis reaction that reactivates PPDK. Unlike the kinase function which can utilize either Thr or Ser as target, the phosphorylase function has a strict substrate requirement for threonyl phosphate. The chain is Pyruvate, phosphate dikinase regulatory protein 1, chloroplastic (RP1) from Arabidopsis thaliana (Mouse-ear cress).